Reading from the N-terminus, the 301-residue chain is Protoheme IX farnesyltransferase 1 (301 aa).

The next 9 membrane-spanning stretches (helical) occupy residues 29–49 (VVALMLLTVLVGMCLAVPTAV), 51–71 (VQPLIAGMFGIALMAGSAAAL), 101–121 (ALIFAASIGGLGFVVLYVLVN), 123–143 (LTAWLTFASLIGYALVYTAYL), 150–170 (NIVIGGLAGAMPPLLGWTAVT), 177–197 (ALLLVIIIFTWTPPHFWALAI), 223–243 (CILLYTVLLAIACLLPVLVGM), 244–264 (CGPMYFVCSSLLSSVFIYKAW), and 281–301 (FSIYHLMLLFMALLIDHYLWS).

This sequence belongs to the UbiA prenyltransferase family. Protoheme IX farnesyltransferase subfamily.

It is found in the cell inner membrane. It carries out the reaction heme b + (2E,6E)-farnesyl diphosphate + H2O = Fe(II)-heme o + diphosphate. It functions in the pathway porphyrin-containing compound metabolism; heme O biosynthesis; heme O from protoheme: step 1/1. In terms of biological role, converts heme B (protoheme IX) to heme O by substitution of the vinyl group on carbon 2 of heme B porphyrin ring with a hydroxyethyl farnesyl side group. The sequence is that of Protoheme IX farnesyltransferase 1 from Shewanella putrefaciens (strain CN-32 / ATCC BAA-453).